We begin with the raw amino-acid sequence, 861 residues long: DNA mismatch repair protein MutS (861 aa).

An ATP-binding site is contributed by G613–S620.

The protein belongs to the DNA mismatch repair MutS family.

In terms of biological role, this protein is involved in the repair of mismatches in DNA. It is possible that it carries out the mismatch recognition step. This protein has a weak ATPase activity. In Dichelobacter nodosus (strain VCS1703A), this protein is DNA mismatch repair protein MutS.